Consider the following 424-residue polypeptide: E3 ubiquitin-protein ligase RNF26 (424 aa).

5 helical membrane passes run 24 to 44, 60 to 80, 157 to 177, 183 to 203, and 224 to 244; these read LNFL…AFIY, GFLL…FGGL, ISTQ…TGPL, VVAA…ILLW, and VVFH…ILIV. The RING-type zinc-finger motif lies at 371 to 413; the sequence is CVICQDQSKTVLLLPCRHLCLCQACTEILMRHPVYHRNCPLCR.

Interacts with INCA1. Interacts with TMEM43, ENDOD1, TMEM33 and TMED1 to form a complex capable of modulating innate immune signaling through the cGAS-STING pathway. Interacts with UBE2J1; this interaction is important for SQSTM1 ubiquitination.

Its subcellular location is the endoplasmic reticulum membrane. The enzyme catalyses S-ubiquitinyl-[E2 ubiquitin-conjugating enzyme]-L-cysteine + [acceptor protein]-L-lysine = [E2 ubiquitin-conjugating enzyme]-L-cysteine + N(6)-ubiquitinyl-[acceptor protein]-L-lysine.. Its pathway is protein modification; protein ubiquitination. Functionally, E3 ubiquitin-protein ligase that plays a key role in endosome organization by retaining vesicles in the perinuclear cloud. Acts as a platform for perinuclear positioning of the endosomal system by mediating ubiquitination of SQSTM1 through interaction with the ubiquitin conjugating enzyme UBE2J1. Ubiquitinated SQSTM1 attracts specific vesicle-associated adapters, forming a molecular bridge that restrains cognate vesicles in the perinuclear region and organizes the endosomal pathway for efficient cargo transport. Also acts as a regulator of type I interferon production in response to viral infection by mediating the formation of 'Lys-11'-linked polyubiquitin chains on TMEM173/STING, leading to stabilize TMEM173/STING. Also required to limit type I interferon response by promoting autophagic degradation of IRF3. This chain is E3 ubiquitin-protein ligase RNF26, found in Mus musculus (Mouse).